A 419-amino-acid chain; its full sequence is S-adenosylmethionine synthase (419 aa).

An ATP-binding site is contributed by histidine 15. Mg(2+) is bound at residue aspartate 17. Residue glutamate 43 participates in K(+) binding. L-methionine-binding residues include glutamate 56 and glutamine 100. The flexible loop stretch occupies residues 100–110 (QSPDIAQGVDE). ATP-binding positions include 171–173 (DGK), 248–249 (KF), aspartate 257, 263–264 (RK), alanine 280, and lysine 284. Residue aspartate 257 coordinates L-methionine. L-methionine is bound at residue lysine 288.

The protein belongs to the AdoMet synthase family. In terms of assembly, homotetramer; dimer of dimers. It depends on Mg(2+) as a cofactor. The cofactor is K(+).

It is found in the cytoplasm. The catalysed reaction is L-methionine + ATP + H2O = S-adenosyl-L-methionine + phosphate + diphosphate. The protein operates within amino-acid biosynthesis; S-adenosyl-L-methionine biosynthesis; S-adenosyl-L-methionine from L-methionine: step 1/1. Its function is as follows. Catalyzes the formation of S-adenosylmethionine (AdoMet) from methionine and ATP. The overall synthetic reaction is composed of two sequential steps, AdoMet formation and the subsequent tripolyphosphate hydrolysis which occurs prior to release of AdoMet from the enzyme. The polypeptide is S-adenosylmethionine synthase (Synechococcus sp. (strain CC9311)).